We begin with the raw amino-acid sequence, 320 residues long: MKTKKSYDKVTRWVTPPILMLIIIHIITGACSSNAYPIFAQKSYENPREATGRIVCANCHLAKKSVEVEVPQSVLPNSVFEAVVKIPYDTQIKQVLANGKKGGLNVGAVLILPEGFELAPPERISPEIKEKMGTLNFQNYSPSKKNIIVIGPIPGQKYQEILFPILSPDPANKKEIHFQKYPIYVGGNRGRGQIYPNGSKSNNTVYNASVTGRISQILRKEKGGYEVTIENISQGRSVIDIIPPGPELLVSEGEFVKADQPLTNNPNVGGFGQINAEIVLQDPSRIQGLLGFLASVVLAQIFLVLKKKQFEKVQLAEMEF.

A signal peptide spans 1 to 32 (MKTKKSYDKVTRWVTPPILMLIIIHIITGACS). The heme site is built by Tyr36, Cys56, Cys59, and His60. The helical transmembrane segment at 286–306 (IQGLLGFLASVVLAQIFLVLK) threads the bilayer.

This sequence belongs to the cytochrome f family. In terms of assembly, the 4 large subunits of the cytochrome b6-f complex are cytochrome b6, subunit IV (17 kDa polypeptide, petD), cytochrome f and the Rieske protein, while the 4 small subunits are PetG, PetL, PetM and PetN. The complex functions as a dimer. Heme serves as cofactor.

It localises to the plastid. It is found in the chloroplast thylakoid membrane. Functionally, component of the cytochrome b6-f complex, which mediates electron transfer between photosystem II (PSII) and photosystem I (PSI), cyclic electron flow around PSI, and state transitions. This Gnetum parvifolium (Small-leaved jointfir) protein is Cytochrome f.